The following is a 124-amino-acid chain: Small ribosomal subunit protein uS12c (124 aa).

Belongs to the universal ribosomal protein uS12 family. In terms of assembly, part of the 30S ribosomal subunit.

The protein localises to the plastid. The protein resides in the chloroplast. Functionally, with S4 and S5 plays an important role in translational accuracy. Located at the interface of the 30S and 50S subunits. The sequence is that of Small ribosomal subunit protein uS12c (rps12) from Ostreococcus tauri.